The sequence spans 436 residues: Eukaryotic translation initiation factor 4B (436 aa).

Residues 56 to 98 (AKNNSNNTRSGGFGGSFGGRSRLDPALGGGSSDRREEYPVPDA) form a disordered region. Phosphoserine occurs at positions 65 and 71. Positions 101–183 (YRAVINNIPW…RTVYVSVAAP (83 aa)) constitute an RRM domain. Positions 185 to 406 (RGGGADVDWS…EKQNGDAKEN (222 aa)) are disordered. The stretch at 190–210 (DVDWSSARGSNFQGDGREDAP) is one 1; approximate repeat. Positions 190–350 (DVDWSSARGS…DWGAARGAQF (161 aa)) are 7 X approximate tandem repeats. 5 consecutive repeat copies span residues 211–232 (DLDWGAARGSNFRGPRREREEV), 233–258 (DIDWTAARGSNFQGSSRPPRREREEV), 259–284 (DIDWSAARGSNFQGSSRPPRREREEP), 285–310 (DIDWSAARGSNFQSSSRPPRREREEP), and 311–340 (DIDWSAARGSNFQSSSRPPRREREKEEPAL). The segment covering 329–338 (PRREREKEEP) has biased composition (basic and acidic residues). One copy of the 7; truncated repeat lies at 341–350 (DWGAARGAQF). Composition is skewed to basic and acidic residues over residues 359–376 (TYKDRSLTNKKTTDEQPK) and 397–406 (EKQNGDAKEN).

In terms of biological role, involved in translation initiation. May be the homolog of mammalian eIF4B and be part of an RNA helicase. STM1/TIF3 is a non-essential gene. This chain is Eukaryotic translation initiation factor 4B (TIF3), found in Saccharomyces cerevisiae (strain ATCC 204508 / S288c) (Baker's yeast).